Reading from the N-terminus, the 148-residue chain is MRVLLQRVKQASVEIDGNVNGEIGQGLLLLVGFTENDGDKEIEYLARKVLNARIFSDADDKMNLSLQQVSGSILSISQFTLYAQTRKGNRPSFTRAQNPDIASKNYDKFNEKLRESGVQVETGIFGADMQVSLVNDGPVTIMYDTDEE.

The Gly-cisPro motif, important for rejection of L-amino acids signature appears at 137-138; the sequence is GP.

Belongs to the DTD family. Homodimer.

It localises to the cytoplasm. The catalysed reaction is glycyl-tRNA(Ala) + H2O = tRNA(Ala) + glycine + H(+). The enzyme catalyses a D-aminoacyl-tRNA + H2O = a tRNA + a D-alpha-amino acid + H(+). Its function is as follows. An aminoacyl-tRNA editing enzyme that deacylates mischarged D-aminoacyl-tRNAs. Also deacylates mischarged glycyl-tRNA(Ala), protecting cells against glycine mischarging by AlaRS. Acts via tRNA-based rather than protein-based catalysis; rejects L-amino acids rather than detecting D-amino acids in the active site. By recycling D-aminoacyl-tRNA to D-amino acids and free tRNA molecules, this enzyme counteracts the toxicity associated with the formation of D-aminoacyl-tRNA entities in vivo and helps enforce protein L-homochirality. This chain is D-aminoacyl-tRNA deacylase, found in Ligilactobacillus salivarius (strain UCC118) (Lactobacillus salivarius).